Reading from the N-terminus, the 854-residue chain is DNA mismatch repair protein MutS (854 aa).

615-622 (GPNMGGKS) contributes to the ATP binding site.

Belongs to the DNA mismatch repair MutS family.

This protein is involved in the repair of mismatches in DNA. It is possible that it carries out the mismatch recognition step. This protein has a weak ATPase activity. The protein is DNA mismatch repair protein MutS of Proteus mirabilis (strain HI4320).